The chain runs to 222 residues: Adenylate kinase (222 aa).

An ATP-binding site is contributed by 10 to 15 (GAGKGT). The interval 30-59 (STGDMLRAAVKAGTPLGIEAKKVMDAGGLV) is NMP. AMP contacts are provided by residues Thr-31, Arg-36, 57–59 (GLV), 85–88 (GFPR), and Gln-92. The LID stretch occupies residues 122 to 159 (GRRVHVASGRTYHVKYNPPKTEGVDDESGEPLIQRDDD). ATP contacts are provided by residues Arg-123 and 132-133 (TY). The segment at 138 to 160 (NPPKTEGVDDESGEPLIQRDDDK) is disordered. Residues Arg-156 and Arg-167 each contribute to the AMP site. Gly-207 contributes to the ATP binding site.

The protein belongs to the adenylate kinase family. Monomer.

The protein resides in the cytoplasm. The catalysed reaction is AMP + ATP = 2 ADP. It functions in the pathway purine metabolism; AMP biosynthesis via salvage pathway; AMP from ADP: step 1/1. Catalyzes the reversible transfer of the terminal phosphate group between ATP and AMP. Plays an important role in cellular energy homeostasis and in adenine nucleotide metabolism. This Ralstonia pickettii (strain 12J) protein is Adenylate kinase.